The primary structure comprises 158 residues: Fibroblast growth factor 2 (158 aa).

A propeptide spanning residues 1–12 (MAAGAAGSITTL) is cleaved from the precursor. Asn39 contributes to the heparin binding site. The interval 131–147 (KRTGQYKPGPKTGPGQK) is heparin-binding.

This sequence belongs to the heparin-binding growth factors family.

It is found in the secreted. The protein resides in the nucleus. Its function is as follows. Acts as a ligand for FGFR1, FGFR2, FGFR3 and FGFR4. Also acts as an integrin ligand which is required for FGF2 signaling. Plays an important role in the regulation of cell survival, cell division, cell differentiation and cell migration. Functions as a potent mitogen in vitro. Can induce angiogenesis. The protein is Fibroblast growth factor 2 (FGF2) of Gallus gallus (Chicken).